An 85-amino-acid polypeptide reads, in one-letter code: Large ribosomal subunit protein bL27 (85 aa).

Residues 1–22 (MAHKKAGGSSRNGRDSHSKRLG) are disordered.

It belongs to the bacterial ribosomal protein bL27 family.

The polypeptide is Large ribosomal subunit protein bL27 (Nitrosomonas europaea (strain ATCC 19718 / CIP 103999 / KCTC 2705 / NBRC 14298)).